The chain runs to 98 residues: NADH-ubiquinone oxidoreductase chain 4L (98 aa).

A run of 3 helical transmembrane segments spans residues 2–22, 29–49, and 61–81; these read PSIF…TLVF, SLLC…LIIL, and ILLL…LVMV.

It belongs to the complex I subunit 4L family. In terms of assembly, core subunit of respiratory chain NADH dehydrogenase (Complex I) which is composed of 45 different subunits.

It is found in the mitochondrion inner membrane. It catalyses the reaction a ubiquinone + NADH + 5 H(+)(in) = a ubiquinol + NAD(+) + 4 H(+)(out). Its function is as follows. Core subunit of the mitochondrial membrane respiratory chain NADH dehydrogenase (Complex I) which catalyzes electron transfer from NADH through the respiratory chain, using ubiquinone as an electron acceptor. Part of the enzyme membrane arm which is embedded in the lipid bilayer and involved in proton translocation. The protein is NADH-ubiquinone oxidoreductase chain 4L (MT-ND4L) of Propithecus tattersalli (Golden-crowned Sifaka).